A 131-amino-acid polypeptide reads, in one-letter code: Sec-independent protein translocase protein TatB (131 aa).

A helical membrane pass occupies residues 2–22 (LGSLSWEHMLVLVVVGLVVLG). A disordered region spans residues 96–131 (AFDRPVNGAAAQPPPAPAPPPEPHRSGQTPFDADAT). The segment covering 107–116 (QPPPAPAPPP) has biased composition (pro residues).

It belongs to the TatB family. As to quaternary structure, the Tat system comprises two distinct complexes: a TatABC complex, containing multiple copies of TatA, TatB and TatC subunits, and a separate TatA complex, containing only TatA subunits. Substrates initially bind to the TatABC complex, which probably triggers association of the separate TatA complex to form the active translocon.

The protein resides in the cell membrane. In terms of biological role, part of the twin-arginine translocation (Tat) system that transports large folded proteins containing a characteristic twin-arginine motif in their signal peptide across membranes. Together with TatC, TatB is part of a receptor directly interacting with Tat signal peptides. TatB may form an oligomeric binding site that transiently accommodates folded Tat precursor proteins before their translocation. The chain is Sec-independent protein translocase protein TatB from Mycolicibacterium paratuberculosis (strain ATCC BAA-968 / K-10) (Mycobacterium paratuberculosis).